The chain runs to 436 residues: Hydrogenobyrinate a,c-diamide synthase (436 aa).

One can recognise a GATase cobBQ-type domain in the interval 244-435; it reads RIAVARDDAF…MHVIDFSGEA (192 aa). The active-site Nucleophile is the Cys-327.

The protein belongs to the CobB/CbiA family. Requires Mg(2+) as cofactor.

The catalysed reaction is hydrogenobyrinate + 2 L-glutamine + 2 ATP + 2 H2O = hydrogenobyrinate a,c-diamide + 2 L-glutamate + 2 ADP + 2 phosphate + 2 H(+). It functions in the pathway cofactor biosynthesis; adenosylcobalamin biosynthesis; cob(II)yrinate a,c-diamide from precorrin-2 (aerobic route): step 9/10. Functionally, catalyzes the ATP-dependent amidation of the two carboxylate groups at positions a and c of hydrogenobyrinate, using either L-glutamine or ammonia as the nitrogen source. The sequence is that of Hydrogenobyrinate a,c-diamide synthase from Brucella abortus biovar 1 (strain 9-941).